Consider the following 92-residue polypeptide: Putative membrane protein insertion efficiency factor (92 aa).

Belongs to the UPF0161 family.

Its subcellular location is the cell inner membrane. Could be involved in insertion of integral membrane proteins into the membrane. In Synechococcus sp. (strain CC9605), this protein is Putative membrane protein insertion efficiency factor.